A 234-amino-acid polypeptide reads, in one-letter code: Transcription factor bHLH160 (234 aa).

Positions 1 to 13 (MSSQPNHQTSISS) are enriched in polar residues. The tract at residues 1 to 67 (MSSQPNHQTS…GAAKKQDHNA (67 aa)) is disordered. A compositionally biased stretch (basic and acidic residues) spans 27-37 (IVEKESAEKDT). Positions 60 to 115 (AKKQDHNAKERLRRMRLHASYLTLGTLLPDHSSSSSKKKWSAPSIIDNVITYIPKL) constitute a bHLH domain.

This sequence belongs to the bHLH protein family.

The protein resides in the nucleus. This is Transcription factor bHLH160 from Arabidopsis thaliana (Mouse-ear cress).